A 229-amino-acid chain; its full sequence is MEGFLRFLVAKAILLALASSFVSCYDPSPLQDFCVAVDDASGVFVNGKFCKDPKYVKAEDFFTSGLNIAGNTINRVGSNVTNVNVDKIPGLNTLGVSLVRIDFAPGGQNPPHTHPRATEILVVVEGTLLVGFVTSNQDNNRLFSKVLYPGDVFVFPIGMIHFQVNVGRTNAVAFAGLGSQNPGTITIADAVFGSKPSIMPEILAKAFQLDVNVVKYLEARFSSNYDRHY.

Residues 1-24 (MEGFLRFLVAKAILLALASSFVSC) form the signal peptide. Cys34 and Cys50 form a disulfide bridge. Positions 64-215 (SGLNIAGNTI…AFQLDVNVVK (152 aa)) constitute a Cupin type-1 domain. Asn79 is a glycosylation site (N-linked (GlcNAc...) asparagine). Positions 112, 114, 119, and 161 each coordinate Mn(2+).

Belongs to the germin family. In terms of assembly, oligomer (believed to be a pentamer but probably hexamer).

It is found in the secreted. It localises to the extracellular space. The protein resides in the apoplast. In terms of biological role, may play a role in plant defense. Probably has no oxalate oxidase activity even if the active site is conserved. The sequence is that of Germin-like protein subfamily 1 member 7 from Arabidopsis thaliana (Mouse-ear cress).